A 432-amino-acid chain; its full sequence is Gamma-glutamyl phosphate reductase (432 aa).

Belongs to the gamma-glutamyl phosphate reductase family.

The protein resides in the cytoplasm. It carries out the reaction L-glutamate 5-semialdehyde + phosphate + NADP(+) = L-glutamyl 5-phosphate + NADPH + H(+). It functions in the pathway amino-acid biosynthesis; L-proline biosynthesis; L-glutamate 5-semialdehyde from L-glutamate: step 2/2. Catalyzes the NADPH-dependent reduction of L-glutamate 5-phosphate into L-glutamate 5-semialdehyde and phosphate. The product spontaneously undergoes cyclization to form 1-pyrroline-5-carboxylate. This chain is Gamma-glutamyl phosphate reductase, found in Kineococcus radiotolerans (strain ATCC BAA-149 / DSM 14245 / SRS30216).